Reading from the N-terminus, the 535-residue chain is CTP synthase (535 aa).

The tract at residues 1 to 267 is amidoligase domain; the sequence is MTKYIFVTGG…DQIVCDHLKL (267 aa). Ser13 contacts CTP. A UTP-binding site is contributed by Ser13. 14–19 lines the ATP pocket; that stretch reads SLGKGI. Tyr54 contributes to the L-glutamine binding site. Asp71 serves as a coordination point for ATP. The Mg(2+) site is built by Asp71 and Glu141. CTP contacts are provided by residues 148–150, 188–193, and Lys224; these read DIE and KTKPTQ. Residues 188 to 193 and Lys224 contribute to the UTP site; that span reads KTKPTQ. 240–242 contacts ATP; sequence RDA. One can recognise a Glutamine amidotransferase type-1 domain in the interval 292-534; it reads KIALVGKYVE…VRASITNKES (243 aa). Residue Gly354 coordinates L-glutamine. The active-site Nucleophile; for glutamine hydrolysis is the Cys381. L-glutamine contacts are provided by residues 382 to 385, Glu405, and Arg462; that span reads LGMQ. Active-site residues include His507 and Glu509.

It belongs to the CTP synthase family. As to quaternary structure, homotetramer.

The enzyme catalyses UTP + L-glutamine + ATP + H2O = CTP + L-glutamate + ADP + phosphate + 2 H(+). It catalyses the reaction L-glutamine + H2O = L-glutamate + NH4(+). The catalysed reaction is UTP + NH4(+) + ATP = CTP + ADP + phosphate + 2 H(+). Its pathway is pyrimidine metabolism; CTP biosynthesis via de novo pathway; CTP from UDP: step 2/2. With respect to regulation, allosterically activated by GTP, when glutamine is the substrate; GTP has no effect on the reaction when ammonia is the substrate. The allosteric effector GTP functions by stabilizing the protein conformation that binds the tetrahedral intermediate(s) formed during glutamine hydrolysis. Inhibited by the product CTP, via allosteric rather than competitive inhibition. Catalyzes the ATP-dependent amination of UTP to CTP with either L-glutamine or ammonia as the source of nitrogen. Regulates intracellular CTP levels through interactions with the four ribonucleotide triphosphates. The sequence is that of CTP synthase from Bacillus cereus (strain AH820).